The following is a 100-amino-acid chain: Small ribosomal subunit protein uS14c (100 aa).

Belongs to the universal ribosomal protein uS14 family. In terms of assembly, part of the 30S ribosomal subunit.

It localises to the plastid. The protein localises to the chloroplast. Its function is as follows. Binds 16S rRNA, required for the assembly of 30S particles. The sequence is that of Small ribosomal subunit protein uS14c from Nasturtium officinale (Watercress).